The following is a 619-amino-acid chain: Pentatricopeptide repeat-containing protein At1g68980, mitochondrial (619 aa).

Residues 1–100 constitute a mitochondrion transit peptide; the sequence is MLRKTLTLIS…RAFVSTTYVI (100 aa). PPR repeat units follow at residues 186-221, 222-256, 257-292, 295-329, 366-400, 401-435, 436-466, 472-506, 507-541, and 542-576; these read DLVA…GVKP, DELS…GFAS, RRIL…GEAS, SEET…ESMS, GIGV…GLQL, DVET…RVAD, LKRC…VMED, KSHD…QYEP, NNQT…KAKL, and EHAL…KIFV.

This sequence belongs to the PPR family. P subfamily.

The protein localises to the mitochondrion. This is Pentatricopeptide repeat-containing protein At1g68980, mitochondrial from Arabidopsis thaliana (Mouse-ear cress).